The following is a 451-amino-acid chain: Glycylpeptide N-tetradecanoyltransferase (451 aa).

Tetradecanoyl-CoA contacts are provided by residues 177–179 (LCI) and 185–189 (NKRLA). Leu451 acts as the Proton acceptor; via carboxylate in catalysis.

The protein belongs to the NMT family. Monomer.

The protein localises to the cytoplasm. The enzyme catalyses N-terminal glycyl-[protein] + tetradecanoyl-CoA = N-tetradecanoylglycyl-[protein] + CoA + H(+). Competitively inhibited by SC-58272, a peptidomimetic derived from the N-terminal sequence of a natural substrate. Its function is as follows. Adds a myristoyl group to the N-terminal glycine residue of certain cellular proteins. Substrate specificity requires an N-terminal glycine in the nascent polypeptide substrates. Ser is present at position 5 in almost all known N-myristoyl proteins and Lys is commonly encountered at postion 6. Basic residues are preferred at positions 7 and 8. This is Glycylpeptide N-tetradecanoyltransferase (NMT1) from Candida albicans (strain SC5314 / ATCC MYA-2876) (Yeast).